Here is a 303-residue protein sequence, read N- to C-terminus: Large ribosomal subunit protein uL1m (303 aa).

The protein belongs to the universal ribosomal protein uL1 family. Component of the mitochondrial large ribosomal subunit (mt-LSU). Mature N.crassa 74S mitochondrial ribosomes consist of a small (37S) and a large (54S) subunit. The 37S small subunit contains a 16S ribosomal RNA (16S mt-rRNA) and 32 different proteins. The 54S large subunit contains a 23S rRNA (23S mt-rRNA) and 42 different proteins.

Its subcellular location is the mitochondrion. In terms of biological role, component of the mitochondrial ribosome (mitoribosome), a dedicated translation machinery responsible for the synthesis of mitochondrial genome-encoded proteins, including at least some of the essential transmembrane subunits of the mitochondrial respiratory chain. The mitoribosomes are attached to the mitochondrial inner membrane and translation products are cotranslationally integrated into the membrane. The protein is Large ribosomal subunit protein uL1m (mrpl1) of Neurospora crassa (strain ATCC 24698 / 74-OR23-1A / CBS 708.71 / DSM 1257 / FGSC 987).